We begin with the raw amino-acid sequence, 451 residues long: Serine--tRNA ligase (451 aa).

Position 247-249 (247-249 (TAE)) interacts with L-serine. Residues 278–280 (RKE) and Val-294 contribute to the ATP site. An L-serine-binding site is contributed by Glu-301. 365–368 (ELAS) serves as a coordination point for ATP. Thr-400 is an L-serine binding site.

Belongs to the class-II aminoacyl-tRNA synthetase family. Type-1 seryl-tRNA synthetase subfamily. In terms of assembly, homodimer. The tRNA molecule binds across the dimer.

It localises to the cytoplasm. The enzyme catalyses tRNA(Ser) + L-serine + ATP = L-seryl-tRNA(Ser) + AMP + diphosphate + H(+). The catalysed reaction is tRNA(Sec) + L-serine + ATP = L-seryl-tRNA(Sec) + AMP + diphosphate + H(+). It functions in the pathway aminoacyl-tRNA biosynthesis; selenocysteinyl-tRNA(Sec) biosynthesis; L-seryl-tRNA(Sec) from L-serine and tRNA(Sec): step 1/1. Functionally, catalyzes the attachment of serine to tRNA(Ser). Is also able to aminoacylate tRNA(Sec) with serine, to form the misacylated tRNA L-seryl-tRNA(Sec), which will be further converted into selenocysteinyl-tRNA(Sec). This Pyrobaculum aerophilum (strain ATCC 51768 / DSM 7523 / JCM 9630 / CIP 104966 / NBRC 100827 / IM2) protein is Serine--tRNA ligase.